Here is an 824-residue protein sequence, read N- to C-terminus: LPS-assembly protein LptD (824 aa).

2 disordered regions span residues 1 to 26 and 67 to 117; these read MTEQ…RRVR and TQTP…PAYV. The first 48 residues, 1–48, serve as a signal peptide directing secretion; the sequence is MTEQRRSPHHPATRPPAPPGTSRRVRLPASALRPLVLAMAGLTVSAHA. Residues 98–115 show a composition bias toward low complexity; it reads NTLNLSPSSTPSNPNAPA.

The protein belongs to the LptD family. In terms of assembly, component of the lipopolysaccharide transport and assembly complex. Interacts with LptE and LptA.

Its subcellular location is the cell outer membrane. In terms of biological role, together with LptE, is involved in the assembly of lipopolysaccharide (LPS) at the surface of the outer membrane. In Cupriavidus metallidurans (strain ATCC 43123 / DSM 2839 / NBRC 102507 / CH34) (Ralstonia metallidurans), this protein is LPS-assembly protein LptD.